The sequence spans 215 residues: Na(+)-translocating NADH-quinone reductase subunit D (215 aa).

A run of 6 helical transmembrane segments spans residues 14–34, 42–62, 72–92, 103–123, 131–151, and 178–198; these read PFIS…ALAV, FVMA…ISLI, IIVQ…LLKA, VFVG…AYAM, FLDG…VGTI, and NGML…IWVL.

Belongs to the NqrDE/RnfAE family. In terms of assembly, composed of six subunits; NqrA, NqrB, NqrC, NqrD, NqrE and NqrF.

It is found in the cell inner membrane. It catalyses the reaction a ubiquinone + n Na(+)(in) + NADH + H(+) = a ubiquinol + n Na(+)(out) + NAD(+). NQR complex catalyzes the reduction of ubiquinone-1 to ubiquinol by two successive reactions, coupled with the transport of Na(+) ions from the cytoplasm to the periplasm. NqrA to NqrE are probably involved in the second step, the conversion of ubisemiquinone to ubiquinol. This chain is Na(+)-translocating NADH-quinone reductase subunit D, found in Tolumonas auensis (strain DSM 9187 / NBRC 110442 / TA 4).